A 296-amino-acid chain; its full sequence is Formamidopyrimidine-DNA glycosylase (296 aa).

The active-site Schiff-base intermediate with DNA is Pro-2. Residue Glu-3 is the Proton donor of the active site. Residue Lys-61 is the Proton donor; for beta-elimination activity of the active site. 3 residues coordinate DNA: His-104, Arg-123, and Lys-169. The FPG-type zinc finger occupies 255–289; the sequence is DAYGREGEPCRRCGAIMRRDKFMNRSSFYCPRCQP. Arg-279 serves as the catalytic Proton donor; for delta-elimination activity.

This sequence belongs to the FPG family. In terms of assembly, monomer. Zn(2+) serves as cofactor.

It catalyses the reaction Hydrolysis of DNA containing ring-opened 7-methylguanine residues, releasing 2,6-diamino-4-hydroxy-5-(N-methyl)formamidopyrimidine.. The catalysed reaction is 2'-deoxyribonucleotide-(2'-deoxyribose 5'-phosphate)-2'-deoxyribonucleotide-DNA = a 3'-end 2'-deoxyribonucleotide-(2,3-dehydro-2,3-deoxyribose 5'-phosphate)-DNA + a 5'-end 5'-phospho-2'-deoxyribonucleoside-DNA + H(+). In terms of biological role, involved in base excision repair of DNA damaged by oxidation or by mutagenic agents. Acts as a DNA glycosylase that recognizes and removes damaged bases. Has a preference for oxidized purines, such as 7,8-dihydro-8-oxoguanine (8-oxoG). Has AP (apurinic/apyrimidinic) lyase activity and introduces nicks in the DNA strand. Cleaves the DNA backbone by beta-delta elimination to generate a single-strand break at the site of the removed base with both 3'- and 5'-phosphates. The chain is Formamidopyrimidine-DNA glycosylase from Mycobacterium sp. (strain KMS).